A 71-amino-acid chain; its full sequence is Protein translocase subunit SecE (71 aa).

A helical membrane pass occupies residues 43–63; that stretch reads VAGAGILAVGAIGFIIYVLLT.

This sequence belongs to the SecE/SEC61-gamma family. In terms of assembly, component of the Sec protein translocase complex. Heterotrimer consisting of SecY (alpha), SecG (beta) and SecE (gamma) subunits. The heterotrimers can form oligomers, although 1 heterotrimer is thought to be able to translocate proteins. Interacts with the ribosome. May interact with SecDF, and other proteins may be involved.

The protein localises to the cell membrane. Essential subunit of the Sec protein translocation channel SecYEG. Clamps together the 2 halves of SecY. May contact the channel plug during translocation. The polypeptide is Protein translocase subunit SecE (Methanosarcina acetivorans (strain ATCC 35395 / DSM 2834 / JCM 12185 / C2A)).